Reading from the N-terminus, the 72-residue chain is Large ribosomal subunit protein bL31 (72 aa).

It belongs to the bacterial ribosomal protein bL31 family. Type A subfamily. In terms of assembly, part of the 50S ribosomal subunit.

Binds the 23S rRNA. The sequence is that of Large ribosomal subunit protein bL31 from Deinococcus geothermalis (strain DSM 11300 / CIP 105573 / AG-3a).